A 369-amino-acid chain; its full sequence is Glutamate 5-kinase (369 aa).

Lys-9 is an ATP binding site. Ser-49, Asp-136, and Asn-148 together coordinate substrate. ATP is bound by residues 168 to 169 (TD) and 210 to 216 (TGGMLTK). The 81-residue stretch at 275–355 (QGSIWVDKGA…KGVLIYRDDW (81 aa)) folds into the PUA domain.

Belongs to the glutamate 5-kinase family.

The protein resides in the cytoplasm. It carries out the reaction L-glutamate + ATP = L-glutamyl 5-phosphate + ADP. It participates in amino-acid biosynthesis; L-proline biosynthesis; L-glutamate 5-semialdehyde from L-glutamate: step 1/2. In terms of biological role, catalyzes the transfer of a phosphate group to glutamate to form L-glutamate 5-phosphate. The polypeptide is Glutamate 5-kinase (Streptococcus pneumoniae (strain 70585)).